We begin with the raw amino-acid sequence, 251 residues long: Malonyl-[acyl-carrier protein] O-methyltransferase (251 aa).

The protein belongs to the methyltransferase superfamily.

The catalysed reaction is malonyl-[ACP] + S-adenosyl-L-methionine = malonyl-[ACP] methyl ester + S-adenosyl-L-homocysteine. Its pathway is cofactor biosynthesis; biotin biosynthesis. Converts the free carboxyl group of a malonyl-thioester to its methyl ester by transfer of a methyl group from S-adenosyl-L-methionine (SAM). It allows to synthesize pimeloyl-ACP via the fatty acid synthetic pathway. This chain is Malonyl-[acyl-carrier protein] O-methyltransferase, found in Enterobacter lignolyticus (strain SCF1).